Consider the following 118-residue polypeptide: Putative pterin-4-alpha-carbinolamine dehydratase (118 aa).

The protein belongs to the pterin-4-alpha-carbinolamine dehydratase family.

It carries out the reaction (4aS,6R)-4a-hydroxy-L-erythro-5,6,7,8-tetrahydrobiopterin = (6R)-L-erythro-6,7-dihydrobiopterin + H2O. The protein is Putative pterin-4-alpha-carbinolamine dehydratase of Xanthomonas oryzae pv. oryzae (strain PXO99A).